The primary structure comprises 223 residues: uncharacterized protein (223 aa).

A Tyr recombinase domain is found at 29–220 (KQTYKMFKED…AKEILKNIGD (192 aa)). Residues arginine 71, lysine 103, histidine 170, arginine 173, and histidine 196 contribute to the active site. The active-site O-(3'-phospho-DNA)-tyrosine intermediate is tyrosine 205.

This sequence belongs to the 'phage' integrase family.

This is an uncharacterized protein from Methanocaldococcus jannaschii (strain ATCC 43067 / DSM 2661 / JAL-1 / JCM 10045 / NBRC 100440) (Methanococcus jannaschii).